The primary structure comprises 251 residues: Imidazole glycerol phosphate synthase subunit HisF (251 aa).

Catalysis depends on residues D13 and D132.

The protein belongs to the HisA/HisF family. As to quaternary structure, heterodimer of HisH and HisF.

It is found in the cytoplasm. It catalyses the reaction 5-[(5-phospho-1-deoxy-D-ribulos-1-ylimino)methylamino]-1-(5-phospho-beta-D-ribosyl)imidazole-4-carboxamide + L-glutamine = D-erythro-1-(imidazol-4-yl)glycerol 3-phosphate + 5-amino-1-(5-phospho-beta-D-ribosyl)imidazole-4-carboxamide + L-glutamate + H(+). It participates in amino-acid biosynthesis; L-histidine biosynthesis; L-histidine from 5-phospho-alpha-D-ribose 1-diphosphate: step 5/9. In terms of biological role, IGPS catalyzes the conversion of PRFAR and glutamine to IGP, AICAR and glutamate. The HisF subunit catalyzes the cyclization activity that produces IGP and AICAR from PRFAR using the ammonia provided by the HisH subunit. This chain is Imidazole glycerol phosphate synthase subunit HisF, found in Campylobacter concisus (strain 13826).